A 245-amino-acid chain; its full sequence is NAD-dependent protein deacylase 1 (245 aa).

The region spanning 1–243 (MDEKLLKTIA…DELVRHVRKA (243 aa)) is the Deacetylase sirtuin-type domain. Position 20–39 (20–39 (GAGVSAESGIPTFRGKDGLW)) interacts with NAD(+). 2 residues coordinate substrate: Y64 and R67. 98 to 101 (QNVD) lines the NAD(+) pocket. H116 (proton acceptor) is an active-site residue. Residues C124, C127, C145, and C148 each contribute to the Zn(2+) site. NAD(+)-binding positions include 185–187 (GTS), 211–213 (NPD), and A229.

It belongs to the sirtuin family. Class III subfamily. Requires Zn(2+) as cofactor.

The protein localises to the cytoplasm. It carries out the reaction N(6)-acetyl-L-lysyl-[protein] + NAD(+) + H2O = 2''-O-acetyl-ADP-D-ribose + nicotinamide + L-lysyl-[protein]. The catalysed reaction is N(6)-succinyl-L-lysyl-[protein] + NAD(+) + H2O = 2''-O-succinyl-ADP-D-ribose + nicotinamide + L-lysyl-[protein]. Functionally, NAD-dependent lysine deacetylase and desuccinylase that specifically removes acetyl and succinyl groups on target proteins. Modulates the activities of several proteins which are inactive in their acylated form. Deacetylates the N-terminal lysine residue of Alba, the major archaeal chromatin protein and that, in turn, increases Alba's DNA binding affinity, thereby repressing transcription. This is NAD-dependent protein deacylase 1 from Archaeoglobus fulgidus (strain ATCC 49558 / DSM 4304 / JCM 9628 / NBRC 100126 / VC-16).